The following is a 536-amino-acid chain: Chaperonin GroEL (536 aa).

ATP contacts are provided by residues 29-32 (TLGP), 86-90 (DGTTT), glycine 413, 476-478 (DAA), and aspartate 492.

The protein belongs to the chaperonin (HSP60) family. In terms of assembly, forms a cylinder of 14 subunits composed of two heptameric rings stacked back-to-back. Interacts with the co-chaperonin GroES.

It is found in the cytoplasm. The catalysed reaction is ATP + H2O + a folded polypeptide = ADP + phosphate + an unfolded polypeptide.. Together with its co-chaperonin GroES, plays an essential role in assisting protein folding. The GroEL-GroES system forms a nano-cage that allows encapsulation of the non-native substrate proteins and provides a physical environment optimized to promote and accelerate protein folding. The protein is Chaperonin GroEL of Methanococcus vannielii (strain ATCC 35089 / DSM 1224 / JCM 13029 / OCM 148 / SB).